We begin with the raw amino-acid sequence, 384 residues long: S-adenosylmethionine synthase (384 aa).

His15 provides a ligand contact to ATP. Residue Asp17 coordinates Mg(2+). Glu43 contacts K(+). L-methionine is bound by residues Glu56 and Gln99. The segment at 99 to 109 is flexible loop; that stretch reads QSPDINQGVDR. Residues 164–166, 230–231, Asp239, 245–246, Ala262, and Lys266 contribute to the ATP site; these read DAK, RF, and RK. L-methionine is bound at residue Asp239. Lys270 serves as a coordination point for L-methionine.

It belongs to the AdoMet synthase family. Homotetramer; dimer of dimers. Mg(2+) serves as cofactor. K(+) is required as a cofactor.

The protein localises to the cytoplasm. It catalyses the reaction L-methionine + ATP + H2O = S-adenosyl-L-methionine + phosphate + diphosphate. Its pathway is amino-acid biosynthesis; S-adenosyl-L-methionine biosynthesis; S-adenosyl-L-methionine from L-methionine: step 1/1. Its function is as follows. Catalyzes the formation of S-adenosylmethionine (AdoMet) from methionine and ATP. The overall synthetic reaction is composed of two sequential steps, AdoMet formation and the subsequent tripolyphosphate hydrolysis which occurs prior to release of AdoMet from the enzyme. This Yersinia pseudotuberculosis serotype IB (strain PB1/+) protein is S-adenosylmethionine synthase.